Consider the following 895-residue polypeptide: Probable aminodeoxychorismate synthase, chloroplastic (895 aa).

Positions 1–45 (MAALRLPTPPPPRAPAPWLHSSHRRRVAAPRGAGGGGGGGGAVPP) are disordered. A chloroplast-targeting transit peptide spans 1-48 (MAALRLPTPPPPRAPAPWLHSSHRRRVAAPRGAGGGGGGGGAVPPPPV). The segment covering 32-42 (GAGGGGGGGGA) has biased composition (gly residues). Residues 49–307 (RTLLIDNYDS…KKITTDFGLQ (259 aa)) form the Glutamine amidotransferase type-1 domain. The active-site Nucleophile is C135. Active-site residues include H281 and E283. Residues 387–875 (IFSVLFGHHS…KAKAPTKVVE (489 aa)) form a PABB component region.

This sequence in the C-terminal section; belongs to the anthranilate synthase component I family.

The protein resides in the plastid. It is found in the chloroplast. It carries out the reaction chorismate + L-glutamine = 4-amino-4-deoxychorismate + L-glutamate. It functions in the pathway cofactor biosynthesis; tetrahydrofolate biosynthesis; 4-aminobenzoate from chorismate: step 1/2. The protein operates within antibiotic biosynthesis; candicidin biosynthesis. Bifunctional enzyme that catalyzes the biosynthesis of 4-amino-4-deoxychorismate (ADC) from chorismate and glutamine. In the first step, a glutamine amidotransferase generates ammonia that is channelled between the binding sites of glutamine and chorismate and used along with chorismate in the second step, catalyzed by aminodeoxychorismate synthase, to produce ADC. Required for the synthesis of 4-aminobenzoate (PABA), an important component in tetrahydrofolate biosynthesis. Does not possess ADC lyase activity. The chain is Probable aminodeoxychorismate synthase, chloroplastic (ADCS) from Oryza sativa subsp. japonica (Rice).